The following is a 206-amino-acid chain: Type III pantothenate kinase (206 aa).

5-12 (DIGNTFLH) is an ATP binding site. Residues Tyr-69 and 73 to 76 (GVDR) contribute to the substrate site. Asp-75 (proton acceptor) is an active-site residue. Asp-90 is a binding site for K(+). Ser-93 is an ATP binding site. Residue Thr-145 coordinates substrate.

It belongs to the type III pantothenate kinase family. As to quaternary structure, homodimer. NH4(+) is required as a cofactor. Requires K(+) as cofactor.

It is found in the cytoplasm. The catalysed reaction is (R)-pantothenate + ATP = (R)-4'-phosphopantothenate + ADP + H(+). Its pathway is cofactor biosynthesis; coenzyme A biosynthesis; CoA from (R)-pantothenate: step 1/5. Catalyzes the phosphorylation of pantothenate (Pan), the first step in CoA biosynthesis. The protein is Type III pantothenate kinase of Helicobacter hepaticus (strain ATCC 51449 / 3B1).